Reading from the N-terminus, the 300-residue chain is MRQRKNVTKFIKRAYRDMGELKQYKRYTKTRLNIISNKVFLLKNELYPLQPKKKRGKRDQQLKTTYTKKKLKRILSLLFRIGGKIYRKKIKKKKINLKKQQEPFTQNLTLHRLFRKFYLNLKLKQFKLLYKKYKGNEKVIIQQLEKRVDMVLLRSGFVRSLYEARQIINHKHLLVNGKIASLPGYMINVGDIISFKEGSMKRKLLKRLKKGLISKKSRKRWTNRNFKFKRFQNYKRKRQKKKNKNKVRATGPNYLEISHSLLLISLIEEPKLTAIKYPFTLQPEKNIKFITLLKKYKRLR.

The S4 RNA-binding domain maps to 146-209; that stretch reads KRVDMVLLRS…MKRKLLKRLK (64 aa).

Belongs to the universal ribosomal protein uS4 family.

It is found in the mitochondrion. In Dictyostelium discoideum (Social amoeba), this protein is Small ribosomal subunit protein uS4m (mrps4).